The sequence spans 169 residues: Peptide deformylase (169 aa).

Cys91 and His133 together coordinate Fe cation. Glu134 is a catalytic residue. Position 137 (His137) interacts with Fe cation.

It belongs to the polypeptide deformylase family. Requires Fe(2+) as cofactor.

The catalysed reaction is N-terminal N-formyl-L-methionyl-[peptide] + H2O = N-terminal L-methionyl-[peptide] + formate. Removes the formyl group from the N-terminal Met of newly synthesized proteins. Requires at least a dipeptide for an efficient rate of reaction. N-terminal L-methionine is a prerequisite for activity but the enzyme has broad specificity at other positions. The polypeptide is Peptide deformylase (Salmonella typhi).